The chain runs to 1035 residues: Cell-division control histidine kinase PdhS (1035 aa).

Residues 1–613 (MSGSYPFIDI…HADGSEEPVD (613 aa)) are important for polar localization. The tract at residues 500-533 (QGLANTRAESETPVSETSSIEPVEPTPPVKTRSE) is disordered. The interaction with DivK stretch occupies residues 614–1035 (AHLNAIAWRG…VFPPTRVLAD (422 aa)). The 72-residue stretch at 659–730 (HVEELKTILD…YLHGLSGNGV (72 aa)) folds into the PAS domain. The 230-residue stretch at 802–1031 (RISHEIRTPL…VVEIVFPPTR (230 aa)) folds into the Histidine kinase domain. Histidine 805 carries the phosphohistidine; by autocatalysis modification.

In terms of assembly, interacts with DivK.

Its subcellular location is the cytoplasm. The enzyme catalyses ATP + protein L-histidine = ADP + protein N-phospho-L-histidine.. Its function is as follows. Functions as a polar differentiation marker. Essential protein that, by localizing in the old pole of dividing cells, controls cell division and maturation, probably through control of DivK phosphorylation status and cellular distribution, which in turn regulates CtrA, a transcriptional regulator of the minB operon. The asymmetrical localization of this protein is probably required for cells to enter a new division cycle. The chain is Cell-division control histidine kinase PdhS (pdhS) from Brucella suis biovar 1 (strain 1330).